We begin with the raw amino-acid sequence, 67 residues long: Large ribosomal subunit protein uL29 (67 aa).

Belongs to the universal ribosomal protein uL29 family.

The sequence is that of Large ribosomal subunit protein uL29 from Sphingopyxis alaskensis (strain DSM 13593 / LMG 18877 / RB2256) (Sphingomonas alaskensis).